Consider the following 494-residue polypeptide: Lysine--tRNA ligase (494 aa).

Positions 405 and 412 each coordinate Mg(2+).

The protein belongs to the class-II aminoacyl-tRNA synthetase family. In terms of assembly, homodimer. It depends on Mg(2+) as a cofactor.

It localises to the cytoplasm. It carries out the reaction tRNA(Lys) + L-lysine + ATP = L-lysyl-tRNA(Lys) + AMP + diphosphate. This Geobacillus stearothermophilus (Bacillus stearothermophilus) protein is Lysine--tRNA ligase (lysS).